We begin with the raw amino-acid sequence, 551 residues long: MSDIAITISLLALVAVIGLWIGHWKIRGVGLGIGGVLFGGIIVAHFTNQYGLKLDAHTLHFVQEFGLILFVYTIGIQVGPGFFSSLRKSGLKLNAFAILIIVLGSIAVVLVHKIADVPLDIALGIYSGAVTNTPALGAGQQILAELGVPQTTVTMGVSYAMAYPFGICGILLAMWLIRLFFKVKVDDEAARFNAESSQDKESLHNISLKVTNQNLDGLTLIQIPGFSDEEVVCSRLKRDDMEIVPKASTEIRINDILQLVGDDNSLAKMRLIIGYEVDAPTVAYSGEIRSERVVVTNEKVLGKKIRALGIHQKYGVVISRLNRAGIELVPTGNTTLQFGDVLHMVGRSDVLNQAISVIGNAQQKLLQVQMLPVFIGIGLGVLVGSIPFYIPGFPVALKLGLAGGPLVVALILARIGTIGKLYWFMPPSANLALREIGIVLFLAVVGLKSGGSFFDTLVNGSGLEWMGYGIFITFIPLMITGILARLYGKLNYLTICGLLAGSMTDPPALAFANEIKEDNGAAALSYATVYPLVMFLRIMSPQLLAVLLWAA.

5 helical membrane-spanning segments follow: residues 4 to 24, 28 to 48, 65 to 85, 95 to 115, and 157 to 177; these read IAIT…IGHW, GVGL…HFTN, FGLI…FFSS, AFAI…HKIA, and VSYA…MWLI. RCK C-terminal domains follow at residues 191-275 and 277-360; these read RFNA…IIGY and VDAP…VIGN. 6 consecutive transmembrane segments (helical) span residues 370–390, 402–424, 438–458, 463–483, 492–512, and 529–549; these read MLPV…PFYI, AGGP…LYWF, IVLF…DTLV, LEWM…TGIL, YLTI…LAFA, and VYPL…VLLW.

Belongs to the AAE transporter (TC 2.A.81) family. YidE subfamily.

It is found in the cell membrane. This is Putative transport protein NTHI0043 from Haemophilus influenzae (strain 86-028NP).